Reading from the N-terminus, the 260-residue chain is Methylesterase 7 (260 aa).

The Acyl-ester intermediate role is filled by serine 84. Catalysis depends on charge relay system residues aspartate 210 and histidine 238.

The protein belongs to the AB hydrolase superfamily. Methylesterase family.

It carries out the reaction methyl (indol-3-yl)acetate + H2O = (indol-3-yl)acetate + methanol + H(+). The enzyme catalyses methyl salicylate + H2O = salicylate + methanol + H(+). It functions in the pathway plant hormone biosynthesis. Esterase activity is down-regulated by salicylic acid (SA). Its function is as follows. Methylesterase shown to have carboxylesterase activity, methyl indole-3-acetic acid (MeIAA) esterase activity and methyl salicylate (MeSA) esterase activity in vitro. Required to convert methyl salicylate (MeSA) to salicylic acid (SA) as part of the signal transduction pathways that activate systemic acquired resistance in systemic tissue. MeSA is believed to be an inactive form that needs to be demethylated to exert a biological effect. This is Methylesterase 7 from Arabidopsis thaliana (Mouse-ear cress).